The sequence spans 308 residues: Acetylglutamate kinase (308 aa).

Residues 86–87 (GG), Arg-108, and Asn-201 contribute to the substrate site.

Belongs to the acetylglutamate kinase family. ArgB subfamily.

It is found in the cytoplasm. It catalyses the reaction N-acetyl-L-glutamate + ATP = N-acetyl-L-glutamyl 5-phosphate + ADP. It functions in the pathway amino-acid biosynthesis; L-arginine biosynthesis; N(2)-acetyl-L-ornithine from L-glutamate: step 2/4. In terms of biological role, catalyzes the ATP-dependent phosphorylation of N-acetyl-L-glutamate. In Prochlorococcus marinus (strain MIT 9313), this protein is Acetylglutamate kinase.